The following is a 135-amino-acid chain: ATP synthase epsilon chain (135 aa).

Belongs to the ATPase epsilon chain family. As to quaternary structure, F-type ATPases have 2 components, CF(1) - the catalytic core - and CF(0) - the membrane proton channel. CF(1) has five subunits: alpha(3), beta(3), gamma(1), delta(1), epsilon(1). CF(0) has three main subunits: a, b and c.

It localises to the cell inner membrane. Functionally, produces ATP from ADP in the presence of a proton gradient across the membrane. The chain is ATP synthase epsilon chain from Mesorhizobium japonicum (strain LMG 29417 / CECT 9101 / MAFF 303099) (Mesorhizobium loti (strain MAFF 303099)).